A 476-amino-acid polypeptide reads, in one-letter code: Zinc metalloproteinase/disintegrin (476 aa).

Positions 1 to 20 (MIQVLLVTICLAAFPYQGSS) are cleaved as a signal peptide. Positions 21–192 (IILESGNVND…ASQSNLTPEQ (172 aa)) are excised as a propeptide. Pyrrolidone carboxylic acid is present on Gln-193. Residues 198 to 393 (RYIELAVVAD…HNPQCILNKP (196 aa)) enclose the Peptidase M12B domain. Ca(2+) contacts are provided by Glu-201 and Asp-285. Cystine bridges form between Cys-309/Cys-388, Cys-348/Cys-372, and Cys-350/Cys-355. A Zn(2+)-binding site is contributed by His-334. Glu-335 is a catalytic residue. 2 residues coordinate Zn(2+): His-338 and His-344. 2 residues coordinate Ca(2+): Cys-388 and Asn-391. Residues 394–403 (LTTVSGNELL) constitute a propeptide that is removed on maturation. Residues 395–476 (TTVSGNELLE…ADCPRNRFHA (82 aa)) form the Disintegrin domain. Cystine bridges form between Cys-409-Cys-424, Cys-411-Cys-419, Cys-418-Cys-441, Cys-432-Cys-438, Cys-437-Cys-462, and Cys-450-Cys-469. A Cell attachment site motif is present at residues 454–456 (RGD).

The protein belongs to the venom metalloproteinase (M12B) family. P-II subfamily. P-IIa sub-subfamily. Monomer (metalloprotease). Requires Zn(2+) as cofactor. The N-terminus is blocked. In terms of processing, not glycosylated. As to expression, expressed by the venom gland.

Its subcellular location is the secreted. Inhibited by EDTA, and 1,10-phenanthroline, but not by PMSF. Its function is as follows. Non-hemorrhagic proteinase that activates prothrombin (F2) calcium-independently. Activates factor X (F10) and hydrolyzes the Aalpha-chain and more slowly the Bbeta-chain of fibrin and fibrinogen without affecting the gamma chain. It induces neither detachment nor apoptosis of human endothelial cells and is also not able to trigger an endothelial pro-inflammatory cell response. Nitric oxide and prostacyclin levels released by endothelial cells are significantly increased after treatment with insularinase A. Functionally, inhibits ADP-induced platelet aggregation (IC(50)=0.8 uM for native protein). Interestingly, inhibits the adhesion of HUVECs to immobilized fibrinogen at very low concentrations (IC(50)=36 nM). The protein is Zinc metalloproteinase/disintegrin of Bothrops insularis (Golden lancehead).